A 312-amino-acid polypeptide reads, in one-letter code: Taste receptor type 2 member 140 (312 aa).

The Extracellular portion of the chain corresponds to 1–9; it reads MKVTVECAL. Residues 10–30 form a helical membrane-spanning segment; that stretch reads LITLIVEIIIGCLGNGFIAVV. Topologically, residues 31–46 are cytoplasmic; that stretch reads NIMDWTKRRRFSLVDQ. The helical transmembrane segment at 47–67 threads the bilayer; sequence ILTALAISRLAFVWSLLTVLV. The Extracellular portion of the chain corresponds to 68 to 87; that stretch reads ISELHSSLLITRKMLRIINN. The chain crosses the membrane as a helical span at residues 88-108; sequence FWTVTNHFSIWLATCLSIFYF. Over 109–133 the chain is Cytoplasmic; it reads LKIANFSNSIFLSLRWRVKTVVSLT. Residues 134-154 form a helical membrane-spanning segment; that stretch reads LLVSLLLLLVNVIIINTCIVI. Topologically, residues 155 to 185 are extracellular; the sequence is SVEGYKVNMSYSSHFNNNPQISRIPLFTNTM. Asn-162 is a glycosylation site (N-linked (GlcNAc...) asparagine). The chain crosses the membrane as a helical span at residues 186 to 206; the sequence is FTFIPFTVTLTIFLLLIFSLW. Residues 207–229 are Cytoplasmic-facing; the sequence is RHLKKMQHRAKGPRDPSTTAHIK. The chain crosses the membrane as a helical span at residues 230–250; the sequence is ALQMVVTFLFLYTIFFLALVM. The Extracellular segment spans residues 251 to 264; the sequence is QAWNNEIQSKTVFN. The chain crosses the membrane as a helical span at residues 265–285; it reads LVFESIALAFPSGHSCVLILG. Over 286-312 the chain is Cytoplasmic; that stretch reads NSKLRQAFLTIIWWLRSSFNAAELSSP.

The protein belongs to the G-protein coupled receptor T2R family.

Its subcellular location is the membrane. Its function is as follows. Putative taste receptor which may play a role in the perception of bitterness. This chain is Taste receptor type 2 member 140, found in Rattus norvegicus (Rat).